The chain runs to 157 residues: MKALYPGSFDPLTLGHLDLIKRGCSLFGEVVIAVLENPTKSPTFSLESRIAQIKDATKEIRGVEVCSFKGLTVEFAKRKNADLILRGLRAMSDFEYELQIAHTNRTLNQNYETVFLATEAHFSFLSSSVVKEVAAFGGEINHMVPERVATELQQKFK.

Position 8 (S8) interacts with substrate. ATP is bound by residues 8 to 9 (SF) and H16. Substrate-binding residues include K40, T72, and R86. ATP contacts are provided by residues 87–89 (GLR), E97, and 122–128 (FSFLSSS).

Belongs to the bacterial CoaD family. Homohexamer. Mg(2+) is required as a cofactor.

It localises to the cytoplasm. It carries out the reaction (R)-4'-phosphopantetheine + ATP + H(+) = 3'-dephospho-CoA + diphosphate. It participates in cofactor biosynthesis; coenzyme A biosynthesis; CoA from (R)-pantothenate: step 4/5. Functionally, reversibly transfers an adenylyl group from ATP to 4'-phosphopantetheine, yielding dephospho-CoA (dPCoA) and pyrophosphate. The protein is Phosphopantetheine adenylyltransferase of Prochlorococcus marinus (strain MIT 9211).